We begin with the raw amino-acid sequence, 1396 residues long: ABC-type transporter cicA (1396 aa).

Residues 1–40 (MRLSSEAKIAESGGQPPTAGSRSETGSESTEAESADPKAQ) are disordered. Residues 18 to 29 (TAGSRSETGSES) show a composition bias toward low complexity. 3 helical membrane passes run 142–162 (FLLG…APYL), 191–211 (GFVV…NQFL), and 300–320 (MFHI…LLLV). One can recognise an ABC transmembrane type-1 1 domain in the interval 143-466 (LLGGFCHLIS…LPLVLGQITD (324 aa)). A glycan (N-linked (GlcNAc...) asparagine) is linked at asparagine 321. The next 3 helical transmembrane spans lie at 324–344 (YSAL…TYAV), 409–429 (ILCV…ITYA), and 440–460 (IFSS…LPLV). A compositionally biased stretch (basic and acidic residues) spans 510 to 533 (AADKEAEKVEKKANPRRTEPKSEA). A disordered region spans residues 510–543 (AADKEAEKVEKKANPRRTEPKSEAPTDSAESDEP). An ABC transporter 1 domain is found at 525 to 751 (RRTEPKSEAP…NDLFKQLMST (227 aa)). Residue 563 to 570 (GTVGSGKS) participates in ATP binding. Asparagine 604 is a glycosylation site (N-linked (GlcNAc...) asparagine). The tract at residues 751–787 (TASQDSKEDEEEATEVVEEEAEKQAQQEPTKPAAALM) is disordered. Over residues 757–771 (KEDEEEATEVVEEEA) the composition is skewed to acidic residues. The next 2 helical transmembrane spans lie at 816–836 (LAIL…NLWL) and 852–872 (YIGI…IFST). The 278-residue stretch at 816-1093 (LAILFLLAFA…TVRQLAEVEN (278 aa)) folds into the ABC transmembrane type-1 2 domain. A glycan (N-linked (GlcNAc...) asparagine) is linked at asparagine 880. 4 helical membrane-spanning segments follow: residues 930 to 947 (MYAI…LIIV), 951 to 970 (YFAI…SNYY), 1036 to 1056 (LSVR…VLVV), and 1065 to 1085 (SISG…QFTV). Residues asparagine 1096, asparagine 1150, and asparagine 1154 are each glycosylated (N-linked (GlcNAc...) asparagine). In terms of domain architecture, ABC transporter 2 spans 1131-1380 (ITFDNVAMRY…EDGIFRAMCE (250 aa)). 1165 to 1172 (GRTGAGKS) is an ATP binding site.

Belongs to the ABC transporter superfamily. ABCC family. Conjugate transporter (TC 3.A.1.208) subfamily.

It is found in the cell membrane. In terms of biological role, ABC-type transporter; part of the gene cluster that mediates the biosynthesis of cichorine, a phytotoxin active against knapweed, corn, and soybeans. CicA is probably involved in the secretion of cichorine. This Emericella nidulans (strain FGSC A4 / ATCC 38163 / CBS 112.46 / NRRL 194 / M139) (Aspergillus nidulans) protein is ABC-type transporter cicA.